Consider the following 371-residue polypeptide: Cytochrome b (371 aa).

4 helical membrane passes run 25–45, 69–90, 105–125, and 170–190; these read FGSM…FLAV, WMMQ…YIHI, WMSG…GYVL, and FFAL…LHVI. Heme b is bound by residues H75 and H89. 2 residues coordinate heme b: H174 and H188. Position 193 (H193) interacts with a ubiquinone. 4 helical membrane passes run 218–238, 280–300, 312–332, and 339–358; these read HKDL…VSFF, LGGA…PFTH, LSQL…WAAT, and FITI…LSIP.

It belongs to the cytochrome b family. In terms of assembly, the cytochrome bc1 complex contains 3 respiratory subunits (MT-CYB, CYC1 and UQCRFS1), 2 core proteins (UQCRC1 and UQCRC2) and probably 6 low-molecular weight proteins. Heme b is required as a cofactor.

It localises to the mitochondrion inner membrane. In terms of biological role, component of the ubiquinol-cytochrome c reductase complex (complex III or cytochrome b-c1 complex) that is part of the mitochondrial respiratory chain. The b-c1 complex mediates electron transfer from ubiquinol to cytochrome c. Contributes to the generation of a proton gradient across the mitochondrial membrane that is then used for ATP synthesis. The chain is Cytochrome b (MT-CYB) from Liasis mackloti savuensis (Savu python).